Reading from the N-terminus, the 382-residue chain is Pyruvate dehydrogenase E1 component subunit beta, mitochondrial (382 aa).

A mitochondrion-targeting transit peptide spans 1 to 46; it reads MSRFLRPAFRLATTATRASTIRPTPSSLITKAAAVPTTRLLQKRSY. Glu-112 is a binding site for thiamine diphosphate. K(+)-binding residues include Ile-165, Ala-213, Ile-214, Asp-216, and Asn-218.

In terms of assembly, eukaryotic pyruvate dehydrogenase (PDH) complexes are organized as a core consisting of the oligomeric dihydrolipoamide acetyl-transferase (E2), around which are arranged multiple copies of pyruvate dehydrogenase (E1), dihydrolipoamide dehydrogenase (E3) and protein X (E3BP) bound by non-covalent bonds. The Chaetomium thermophilum PDH complex contains 60 E2 units, 12 E3BP units, about 20 E1 units, and 12 or more E3 units. The units are organized in 1 E2 60-mer, 4 E3BP trimers, about 20 E1 tetramers, and a maximum of 12 E3 dimers. Pyruvate dehydrogenase (E1) is active as a tetramer of 2 alpha and 2 beta subunits. The E3BP trimers are bound inside the icosahedral core with tetrahedral symmetry. Requires thiamine diphosphate as cofactor.

The protein localises to the mitochondrion. The enzyme catalyses N(6)-[(R)-lipoyl]-L-lysyl-[protein] + pyruvate + H(+) = N(6)-[(R)-S(8)-acetyldihydrolipoyl]-L-lysyl-[protein] + CO2. Its function is as follows. The 10-megadalton pyruvate dehydrogenase complex contains multiple copies of three enzymatic components: pyruvate dehydrogenase (E1), dihydrolipoamide acetyltransferase (E2) and lipoamide dehydrogenase (E3) and catalyzes the overall oxidative decarboxylation of pyruvate to form acetyl-CoA and CO(2). Within the complex, pyruvate and thiamine pyrophosphate (TPP or vitamin B1) are bound by pyruvate dehydrogenase E1 subunits alpha and beta and pyruvate is decarboxylated leading to the 2-carbon hydrohyethyl bound to TPP. The E2 component contains covalently-bound lipoyl cofactors and transfers the hydroxyethyl group from TPP to an oxidized form of covalently bound lipoamide, and the resulting acetyl group is then transferred to free coenzyme A to form acetyl-CoA and reduced dihydrolipoamide-E2. Finally, the flavoprotein dihydrolipoamide dehydrogenase (E3) re-oxidizes the lipoyl group of dihydrolipoamide-E2 to form lipoamide-E2 and NADH. A fourth subunit, E3BP, is responsible for tethering E3 in proximity to the core, forming the entire metabolon. The protein is Pyruvate dehydrogenase E1 component subunit beta, mitochondrial of Chaetomium thermophilum (strain DSM 1495 / CBS 144.50 / IMI 039719) (Thermochaetoides thermophila).